Consider the following 84-residue polypeptide: Limulin (84 aa).

Residues 6 to 84 (ITSKVKFPPS…DEQGDFLFNV (79 aa)) enclose the Pentraxin (PTX) domain. 2 residues coordinate Ca(2+): D67 and N68.

The protein belongs to the pentraxin family. Homopentamer. Pentraxin (or pentaxin) have a discoid arrangement of 5 non-covalently bound subunits. Requires Ca(2+) as cofactor. A disulfide bond links Cys-38 to a Cys in the C-terminal half of the chain of 163 residues.

Its function is as follows. Lectin that binds sialic acid. Displays antiviral activity and therefore may contribute to defense against infections. This is Limulin from Limulus polyphemus (Atlantic horseshoe crab).